Reading from the N-terminus, the 197-residue chain is LexA repressor (197 aa).

Positions 28–47 form a DNA-binding region, H-T-H motif; the sequence is VREIARRFRITPRGALLHLI. Residues Ser-119 and Lys-156 each act as for autocatalytic cleavage activity in the active site.

It belongs to the peptidase S24 family. Homodimer.

The enzyme catalyses Hydrolysis of Ala-|-Gly bond in repressor LexA.. In terms of biological role, represses a number of genes involved in the response to DNA damage (SOS response), including recA and lexA. In the presence of single-stranded DNA, RecA interacts with LexA causing an autocatalytic cleavage which disrupts the DNA-binding part of LexA, leading to derepression of the SOS regulon and eventually DNA repair. The sequence is that of LexA repressor from Thermotoga maritima (strain ATCC 43589 / DSM 3109 / JCM 10099 / NBRC 100826 / MSB8).